Reading from the N-terminus, the 967-residue chain is Transmembrane channel-like protein 5 (967 aa).

Polar residues-rich tracts occupy residues M1–Y10, G21–E31, N53–N62, and Q168–P184. Positions M1–K240 are disordered. At M1 to K420 the chain is on the extracellular side. The chain crosses the membrane as a helical span at residues F421 to G441. Residues A442 to T449 are Cytoplasmic-facing. Residues G450–Y470 traverse the membrane as a helical segment. Over T471 to Q487 the chain is Extracellular. Residues L488–S508 traverse the membrane as a helical segment. The Cytoplasmic segment spans residues M509–H581. Residues V582–L602 form a helical membrane-spanning segment. Topologically, residues A603–P616 are extracellular. Residues G617–Y637 traverse the membrane as a helical segment. Residues S638–N660 lie on the Cytoplasmic side of the membrane. A helical membrane pass occupies residues I661–L681. Residues S682–D694 lie on the Extracellular side of the membrane. Residues I695–F715 form a helical membrane-spanning segment. Topologically, residues L716–W749 are cytoplasmic. A helical membrane pass occupies residues L750–F770. The Extracellular segment spans residues Y771 to F796. A helical membrane pass occupies residues F797 to I817. Residues W818 to N861 lie on the Cytoplasmic side of the membrane. The chain crosses the membrane as a helical span at residues L862–L882. Topologically, residues Y883 to A967 are extracellular.

This sequence belongs to the TMC family. In terms of tissue distribution, ubiquitously expressed.

The protein localises to the membrane. Its function is as follows. Probable component of an ion channel. Molecular function hasn't been characterized yet. The protein is Transmembrane channel-like protein 5 of Mus musculus (Mouse).